Consider the following 475-residue polypeptide: MNNHIQTAISEQGIEAYLHAQQHKSLLRFLTCGSVDDGKSTLIGRLLHDSQQIYEDQLKALESDSQKLGTTGEKLDLALLVDGLQAEREQGITIDVAYRYFSTAKRKFIISDTPGHEQYTRNMATGASTCDLAIILIDARKGVLDQTRRHSFIASLLGIKQFVVAVNKMDLVEFSQEVFERISAEYREFAKKLSVDTIHIVPVSALDGDNVVNPSDKLAWYQGETLLSLLESAEVERELERHPVRLPVQYVNRPNLDFRGFAGTLASGILRVGDKLAVLPSGKESTVTRIVTFDGDLDYALPGQAITVTFADEIDISRGDLLVDAARKPLVTQNLLAHIVWMGEESLQPGRVYDVKLATKKSRGQVEAIRHRIEINKLDELDASELKLNEIGLCELSLTDPVAFDPYQEIRDTGSFILIDRLTNVTVGAGMIVEGLAAKVATGHYSEFEVELNALVRKHFPHWQALTISNDASKE.

In terms of domain architecture, tr-type G spans 24–240; it reads KSLLRFLTCG…ESAEVERELE (217 aa). The G1 stretch occupies residues 33–40; it reads GSVDDGKS. 33 to 40 is a binding site for GTP; it reads GSVDDGKS. Residues 91-95 form a G2 region; that stretch reads GITID. The G3 stretch occupies residues 112 to 115; it reads DTPG. Residues 112–116 and 167–170 each bind GTP; these read DTPGH and NKMD. Residues 167–170 form a G4 region; the sequence is NKMD. Residues 204–206 form a G5 region; that stretch reads SAL.

It belongs to the TRAFAC class translation factor GTPase superfamily. Classic translation factor GTPase family. CysN/NodQ subfamily. Heterodimer composed of CysD, the smaller subunit, and CysN.

It carries out the reaction sulfate + ATP + H(+) = adenosine 5'-phosphosulfate + diphosphate. The protein operates within sulfur metabolism; hydrogen sulfide biosynthesis; sulfite from sulfate: step 1/3. With CysD forms the ATP sulfurylase (ATPS) that catalyzes the adenylation of sulfate producing adenosine 5'-phosphosulfate (APS) and diphosphate, the first enzymatic step in sulfur assimilation pathway. APS synthesis involves the formation of a high-energy phosphoric-sulfuric acid anhydride bond driven by GTP hydrolysis by CysN coupled to ATP hydrolysis by CysD. This is Sulfate adenylyltransferase subunit 1 from Aeromonas hydrophila subsp. hydrophila (strain ATCC 7966 / DSM 30187 / BCRC 13018 / CCUG 14551 / JCM 1027 / KCTC 2358 / NCIMB 9240 / NCTC 8049).